A 194-amino-acid chain; its full sequence is Translationally-controlled tumor protein homolog 2 (194 aa).

Positions 1–194 (MKLYKDLIGN…IKYGLLQVDV (194 aa)) constitute a TCTP domain.

The protein belongs to the TCTP family.

Its subcellular location is the cytoplasm. In terms of biological role, involved in calcium binding and microtubule stabilization. This is Translationally-controlled tumor protein homolog 2 from Dictyostelium discoideum (Social amoeba).